We begin with the raw amino-acid sequence, 393 residues long: MLNSLDLEGRPQDTRVVVAMSGGVDSSTTAALLKAEGYDVVGITLQLYDHGAATHRKGACCAGQDIHDARDVAAKLGIPHYVLDYEDRFRESVIDNFADSYALGETPVPCIECNRSIKFRDLLKTARELGAQALATGHYVASRRLDDGSRVLVCAADADRDQSYFLFATTQEQLDYLRFPLGDMTKPETRELARRFGLAVADKHDSQDICFVPTGRYTDIITRLRPNAMDPGDIVDLDGRVLGRHNGIANFTVGQRRGLGIAAHAPLFVVRLEAANRRVVVGPREALKMHRISLRDVNWLGGGDIDSAIGNGLEMFVRVRSTRSPQPAWLRGAGGHYEIELVAGEEGVSPGQACVFYDAPSGQARVLGGGFIQSAAAKVASNPARPLVEAVRG.

ATP contacts are provided by residues 19–26 (AMSGGVDS) and Leu-45. Cys-113 functions as the Nucleophile in the catalytic mechanism. A disulfide bridge connects residues Cys-113 and Cys-210. Gly-137 lines the ATP pocket. Positions 160–162 (RDQ) are interaction with tRNA. The active-site Cysteine persulfide intermediate is the Cys-210.

This sequence belongs to the MnmA/TRMU family.

Its subcellular location is the cytoplasm. It catalyses the reaction S-sulfanyl-L-cysteinyl-[protein] + uridine(34) in tRNA + AH2 + ATP = 2-thiouridine(34) in tRNA + L-cysteinyl-[protein] + A + AMP + diphosphate + H(+). Catalyzes the 2-thiolation of uridine at the wobble position (U34) of tRNA, leading to the formation of s(2)U34. This chain is tRNA-specific 2-thiouridylase MnmA, found in Bradyrhizobium diazoefficiens (strain JCM 10833 / BCRC 13528 / IAM 13628 / NBRC 14792 / USDA 110).